Reading from the N-terminus, the 319-residue chain is Type II methyltransferase M.RsrI (319 aa).

Positions 1–10 are enriched in basic residues; the sequence is MANRSHHNAG. The interval 1 to 32 is disordered; the sequence is MANRSHHNAGHRAMNALRKSGQKHSSESQLGS.

Belongs to the N(4)/N(6)-methyltransferase family.

It carries out the reaction a 2'-deoxyadenosine in DNA + S-adenosyl-L-methionine = an N(6)-methyl-2'-deoxyadenosine in DNA + S-adenosyl-L-homocysteine + H(+). Its activity is regulated as follows. Strongly inhibited by N-ethylmaleimide, inactivated by MgCl(2) or MgSO(4). In terms of biological role, a beta subtype methylase, recognizes the double-stranded sequence 5'-GAATTC-3', methylates A-3 on both strands, and protects the DNA from cleavage by the RsrI endonuclease. The polypeptide is Type II methyltransferase M.RsrI (Cereibacter sphaeroides (Rhodobacter sphaeroides)).